The primary structure comprises 483 residues: Glutamyl-tRNA(Gln) amidotransferase subunit A (483 aa).

Residues Lys-76 and Ser-151 each act as charge relay system in the active site. The Acyl-ester intermediate role is filled by Ser-175.

Belongs to the amidase family. GatA subfamily. As to quaternary structure, heterotrimer of A, B and C subunits.

The enzyme catalyses L-glutamyl-tRNA(Gln) + L-glutamine + ATP + H2O = L-glutaminyl-tRNA(Gln) + L-glutamate + ADP + phosphate + H(+). In terms of biological role, allows the formation of correctly charged Gln-tRNA(Gln) through the transamidation of misacylated Glu-tRNA(Gln) in organisms which lack glutaminyl-tRNA synthetase. The reaction takes place in the presence of glutamine and ATP through an activated gamma-phospho-Glu-tRNA(Gln). This chain is Glutamyl-tRNA(Gln) amidotransferase subunit A, found in Pseudomonas putida (strain GB-1).